Consider the following 214-residue polypeptide: Adenylate kinase (214 aa).

10-15 (GAGKGT) contacts ATP. Residues 30–59 (STGDMLRAAIKAGTELGLNAKAVMDAGQLV) are NMP. Residues Thr31, Arg36, 57-59 (QLV), 85-88 (GFPR), and Gln92 each bind AMP. The LID stretch occupies residues 122-159 (GRRVHSGSGRTYHVVFNPPKVEGKDDVTGEDLVIRADD). ATP contacts are provided by residues Arg123 and 132-133 (TY). 2 residues coordinate AMP: Arg156 and Arg167. Residue Gln200 participates in ATP binding.

Belongs to the adenylate kinase family. As to quaternary structure, monomer.

It is found in the cytoplasm. The catalysed reaction is AMP + ATP = 2 ADP. Its pathway is purine metabolism; AMP biosynthesis via salvage pathway; AMP from ADP: step 1/1. In terms of biological role, catalyzes the reversible transfer of the terminal phosphate group between ATP and AMP. Plays an important role in cellular energy homeostasis and in adenine nucleotide metabolism. The polypeptide is Adenylate kinase (Aeromonas salmonicida (strain A449)).